A 258-amino-acid polypeptide reads, in one-letter code: MLILISPAKTLDYQSPLTTTRYTLPELLDNSQQLIHEARKLTPPQISTLMRISDKLAGINAARFHDWQPDFTPANARQAILAFKGDVYTGLQAETFSEDDFDFAQQHLRMLSGLYGVLRPLDLMQPYRLEMGIRLENARGKDLYQFWGDIITNKLNEALAAQGDNVVINLASDEYFKSVKPKKLNAEIIKPVFLDEKNGKFKIISFYAKKARGLMSRFIIENRLTKPEQLTGFNSEGYFFDEDSSSNGELVFKRYEQR.

This sequence belongs to the UPF0246 family.

The sequence is that of UPF0246 protein YaaA from Escherichia coli (strain K12 / MC4100 / BW2952).